A 265-amino-acid chain; its full sequence is Anaphase-promoting complex subunit 9 (265 aa).

As to quaternary structure, the APC/C is composed of at least 13 subunits that stay tightly associated throughout the cell cycle: APC1, APC2, APC4, APC5, APC9, APC11, CDC16, CDC23, CDC26, CDC27, DOC1, MND2 and SWM1.

Its subcellular location is the cytoplasm. It is found in the nucleus. The protein operates within protein modification; protein ubiquitination. Functionally, component of the anaphase promoting complex/cyclosome (APC/C), a cell cycle-regulated E3 ubiquitin-protein ligase complex that controls progression through mitosis and the G1 phase of the cell cycle. The APC/C is thought to confer substrate specificity and, in the presence of ubiquitin-conjugating E2 enzymes, it catalyzes the formation of protein-ubiquitin conjugates that are subsequently degraded by the 26S proteasome. In early mitosis, the APC/C is activated by CDC20 and targets securin PDS1, the B-type cyclin CLB5, and other anaphase inhibitory proteins for proteolysis, thereby triggering the separation of sister chromatids at the metaphase-to-anaphase transition. In late mitosis and in G1, degradation of CLB5 allows activation of the APC/C by CDH1, which is needed to destroy CDC20 and the B-type cyclin CLB2 to allow exit from mitosis and creating the low CDK state necessary for cytokinesis and for reforming prereplicative complexes in G1 prior to another round of replication. The sequence is that of Anaphase-promoting complex subunit 9 (APC9) from Saccharomyces cerevisiae (strain ATCC 204508 / S288c) (Baker's yeast).